A 379-amino-acid polypeptide reads, in one-letter code: Protein-glutamate methylesterase/protein-glutamine glutaminase (379 aa).

In terms of domain architecture, Response regulatory spans 4–121 (KILVVDDSIF…AANRQDAVAL (118 aa)). Asp55 carries the 4-aspartylphosphate modification. In terms of domain architecture, CheB-type methylesterase spans 186 to 379 (SGKKYRCLAI…FESHILKEMA (194 aa)). Catalysis depends on residues Ser198, His225, and Asp323.

The protein belongs to the CheB family. Post-translationally, phosphorylated by CheA. Phosphorylation of the N-terminal regulatory domain activates the methylesterase activity.

Its subcellular location is the cytoplasm. The enzyme catalyses [protein]-L-glutamate 5-O-methyl ester + H2O = L-glutamyl-[protein] + methanol + H(+). The catalysed reaction is L-glutaminyl-[protein] + H2O = L-glutamyl-[protein] + NH4(+). Involved in chemotaxis. Part of a chemotaxis signal transduction system that modulates chemotaxis in response to various stimuli. Catalyzes the demethylation of specific methylglutamate residues introduced into the chemoreceptors (methyl-accepting chemotaxis proteins or MCP) by CheR. Also mediates the irreversible deamidation of specific glutamine residues to glutamic acid. The sequence is that of Protein-glutamate methylesterase/protein-glutamine glutaminase from Pseudoalteromonas atlantica (strain T6c / ATCC BAA-1087).